A 166-amino-acid chain; its full sequence is NAD(P)H-quinone oxidoreductase subunit I, chloroplastic (166 aa).

4Fe-4S ferredoxin-type domains follow at residues 55–84 (GRIH…VDWK) and 95–124 (LNYS…MTEE). Cys-64, Cys-67, Cys-70, Cys-74, Cys-104, Cys-107, Cys-110, and Cys-114 together coordinate [4Fe-4S] cluster.

It belongs to the complex I 23 kDa subunit family. NDH is composed of at least 16 different subunits, 5 of which are encoded in the nucleus. Requires [4Fe-4S] cluster as cofactor.

It is found in the plastid. Its subcellular location is the chloroplast thylakoid membrane. It carries out the reaction a plastoquinone + NADH + (n+1) H(+)(in) = a plastoquinol + NAD(+) + n H(+)(out). The catalysed reaction is a plastoquinone + NADPH + (n+1) H(+)(in) = a plastoquinol + NADP(+) + n H(+)(out). Its function is as follows. NDH shuttles electrons from NAD(P)H:plastoquinone, via FMN and iron-sulfur (Fe-S) centers, to quinones in the photosynthetic chain and possibly in a chloroplast respiratory chain. The immediate electron acceptor for the enzyme in this species is believed to be plastoquinone. Couples the redox reaction to proton translocation, and thus conserves the redox energy in a proton gradient. This is NAD(P)H-quinone oxidoreductase subunit I, chloroplastic from Steiractinia sodiroi.